The primary structure comprises 570 residues: Urease subunit alpha (570 aa).

The Urease domain occupies Gly133–Phe570. Positions 138, 140, and 221 each coordinate Ni(2+). Residue Lys221 is modified to N6-carboxylysine. Residue His223 participates in substrate binding. Ni(2+)-binding residues include His250 and His276. His324 acts as the Proton donor in catalysis. Position 364 (Asp364) interacts with Ni(2+).

This sequence belongs to the metallo-dependent hydrolases superfamily. Urease alpha subunit family. In terms of assembly, heterotrimer of UreA (gamma), UreB (beta) and UreC (alpha) subunits. Three heterotrimers associate to form the active enzyme. The cofactor is Ni cation. In terms of processing, carboxylation allows a single lysine to coordinate two nickel ions.

It localises to the cytoplasm. The enzyme catalyses urea + 2 H2O + H(+) = hydrogencarbonate + 2 NH4(+). Its pathway is nitrogen metabolism; urea degradation; CO(2) and NH(3) from urea (urease route): step 1/1. This chain is Urease subunit alpha, found in Cytophaga hutchinsonii (strain ATCC 33406 / DSM 1761 / CIP 103989 / NBRC 15051 / NCIMB 9469 / D465).